The sequence spans 413 residues: Lipoyl synthase, mitochondrial (413 aa).

The transit peptide at 1–33 directs the protein to the mitochondrion; sequence MAAATNRFRALYSSSRVATPQAGSASYLSYRGY. [4Fe-4S] cluster-binding residues include C133, C138, C144, C164, C168, C171, and S379. One can recognise a Radical SAM core domain in the interval 147 to 368; the sequence is GGDKAAATAT…RQRALDMGFL (222 aa).

It belongs to the radical SAM superfamily. Lipoyl synthase family. It depends on [4Fe-4S] cluster as a cofactor.

It is found in the mitochondrion. The enzyme catalyses [[Fe-S] cluster scaffold protein carrying a second [4Fe-4S](2+) cluster] + N(6)-octanoyl-L-lysyl-[protein] + 2 oxidized [2Fe-2S]-[ferredoxin] + 2 S-adenosyl-L-methionine + 4 H(+) = [[Fe-S] cluster scaffold protein] + N(6)-[(R)-dihydrolipoyl]-L-lysyl-[protein] + 4 Fe(3+) + 2 hydrogen sulfide + 2 5'-deoxyadenosine + 2 L-methionine + 2 reduced [2Fe-2S]-[ferredoxin]. It functions in the pathway protein modification; protein lipoylation via endogenous pathway; protein N(6)-(lipoyl)lysine from octanoyl-[acyl-carrier-protein]: step 2/2. Catalyzes the radical-mediated insertion of two sulfur atoms into the C-6 and C-8 positions of the octanoyl moiety bound to the lipoyl domains of lipoate-dependent enzymes, thereby converting the octanoylated domains into lipoylated derivatives. The polypeptide is Lipoyl synthase, mitochondrial (Emericella nidulans (strain FGSC A4 / ATCC 38163 / CBS 112.46 / NRRL 194 / M139) (Aspergillus nidulans)).